The chain runs to 406 residues: Probable sodium/metabolite cotransporter BASS1, chloroplastic (406 aa).

The N-terminal 64 residues, 1–64 (MPLLRRPPAA…RHLCGIPSSR (64 aa)), are a transit peptide targeting the chloroplast. 9 consecutive transmembrane segments (helical) span residues 98–118 (VGEV…AVAL), 123–143 (AFLW…MLGM), 152–172 (LKTA…QYSV), 187–209 (PSYY…SNIV), 217–237 (VALS…LTPL), 252–272 (MGLF…GALL), 278–298 (GLVQ…VAVL), 315–335 (LQVV…GYVL), and 376–396 (VPCA…AGIW).

It belongs to the bile acid:sodium symporter (BASS) (TC 2.A.28) family.

It localises to the membrane. The protein localises to the plastid. It is found in the chloroplast envelope. In terms of biological role, may function as sodium-coupled metabolite transporter across the chloroplast envelope. The polypeptide is Probable sodium/metabolite cotransporter BASS1, chloroplastic (BASS1) (Oryza sativa subsp. japonica (Rice)).